The primary structure comprises 183 residues: Translation initiation factor IF-3 (183 aa).

The protein belongs to the IF-3 family. Monomer.

It is found in the cytoplasm. In terms of biological role, IF-3 binds to the 30S ribosomal subunit and shifts the equilibrium between 70S ribosomes and their 50S and 30S subunits in favor of the free subunits, thus enhancing the availability of 30S subunits on which protein synthesis initiation begins. The sequence is that of Translation initiation factor IF-3 from Pseudomonas putida (strain ATCC 700007 / DSM 6899 / JCM 31910 / BCRC 17059 / LMG 24140 / F1).